Here is a 471-residue protein sequence, read N- to C-terminus: tRNA-2-methylthio-N(6)-dimethylallyladenosine synthase (471 aa).

Positions 31-149 (LYYHIETYGC…FPQLLWEALN (119 aa)) constitute an MTTase N-terminal domain. [4Fe-4S] cluster contacts are provided by Cys-40, Cys-76, Cys-110, Cys-186, Cys-190, and Cys-193. The region spanning 172 to 402 (RDSNLKAWVN…IELQNKISLE (231 aa)) is the Radical SAM core domain. The region spanning 405-468 (AELRGKIVEV…AWTMQGELVE (64 aa)) is the TRAM domain.

Belongs to the methylthiotransferase family. MiaB subfamily. Monomer. The cofactor is [4Fe-4S] cluster.

Its subcellular location is the cytoplasm. It catalyses the reaction N(6)-dimethylallyladenosine(37) in tRNA + (sulfur carrier)-SH + AH2 + 2 S-adenosyl-L-methionine = 2-methylsulfanyl-N(6)-dimethylallyladenosine(37) in tRNA + (sulfur carrier)-H + 5'-deoxyadenosine + L-methionine + A + S-adenosyl-L-homocysteine + 2 H(+). In terms of biological role, catalyzes the methylthiolation of N6-(dimethylallyl)adenosine (i(6)A), leading to the formation of 2-methylthio-N6-(dimethylallyl)adenosine (ms(2)i(6)A) at position 37 in tRNAs that read codons beginning with uridine. This is tRNA-2-methylthio-N(6)-dimethylallyladenosine synthase from Thermoanaerobacter pseudethanolicus (strain ATCC 33223 / 39E) (Clostridium thermohydrosulfuricum).